A 76-amino-acid chain; its full sequence is Endothelin-1 (76 aa).

The interval 30–44 (CQCASQKDKKCWNFC) is endothelin-like.

It belongs to the endothelin/sarafotoxin family.

The protein resides in the secreted. Functionally, endothelins are endothelium-derived vasoconstrictor peptides. Probable ligand for G-protein coupled receptors EDNRA and EDNRB which activates PTK2B, BCAR1, BCAR3 and, GTPases RAP1 and RHOA cascade in glomerular mesangial cells. Also binds the DEAR/FBXW7-AS1 receptor. Promotes mesenteric arterial wall remodeling via activation of ROCK signaling and subsequent colocalization of NFATC3 with F-actin filaments. NFATC3 then translocates to the nucleus where it subsequently promotes the transcription of the smooth muscle hypertrophy and differentiation marker ACTA2. The protein is Endothelin-1 (EDN1) of Macaca fascicularis (Crab-eating macaque).